Here is a 470-residue protein sequence, read N- to C-terminus: Coproporphyrinogen III oxidase (470 aa).

FAD contacts are provided by residues 12 to 17, 41 to 42, K49, 63 to 66, V256, W409, and 448 to 450; these read GGGITG, EA, GPDS, and VGI.

It belongs to the protoporphyrinogen/coproporphyrinogen oxidase family. Coproporphyrinogen III oxidase subfamily. As to quaternary structure, monomer. Requires FAD as cofactor.

The protein localises to the cytoplasm. It is found in the cell membrane. The enzyme catalyses coproporphyrinogen III + 3 O2 = coproporphyrin III + 3 H2O2. The protein operates within porphyrin-containing compound metabolism; protoheme biosynthesis. Its activity is regulated as follows. Only weakly inhibited by acifluorfen, in contrast to eukaryotic family members. Weakly inhibited by methylacifluorfen. Bilirubin, biliverdin and hemin are all competitive inhibitors. Functionally, involved in coproporphyrin-dependent heme b biosynthesis. Catalyzes the oxidation of coproporphyrinogen III to coproporphyrin III. Can also oxidize protoporphyrinogen IX to protoporphyrin-IX. The specific activity for the oxidation of coproporphyrinogen III is much higher than that for the oxidation of protoporphyrinogen IX. Can also oxidize mesoporphyrinogen IX, but not uroporphyrinogen III. This is Coproporphyrinogen III oxidase from Bacillus subtilis (strain 168).